A 441-amino-acid chain; its full sequence is GTPase Der (441 aa).

2 EngA-type G domains span residues 4–169 (PVVA…PDSS) and 178–353 (PRVA…ENNS). Residues 10–17 (GRPNVGKS), 57–61 (DTGGI), 120–123 (NKVD), 184–191 (GKPNVGKS), 231–235 (DTAGL), and 296–299 (NKWD) each bind GTP. The KH-like domain maps to 354–438 (MRVATGVLNE…ALKFITRERK (85 aa)).

This sequence belongs to the TRAFAC class TrmE-Era-EngA-EngB-Septin-like GTPase superfamily. EngA (Der) GTPase family. In terms of assembly, associates with the 50S ribosomal subunit.

In terms of biological role, GTPase that plays an essential role in the late steps of ribosome biogenesis. In Agathobacter rectalis (strain ATCC 33656 / DSM 3377 / JCM 17463 / KCTC 5835 / VPI 0990) (Eubacterium rectale), this protein is GTPase Der.